We begin with the raw amino-acid sequence, 665 residues long: Auxin response factor 1 (665 aa).

The segment at residues 124–226 is a DNA-binding region (TF-B3); the sequence is FCKTLTASDT…ELRVGVRRHM (103 aa). Disordered regions lie at residues 356 to 408, 496 to 542, and 645 to 665; these read VANS…SVPL, PVPS…RQIR, and KADAEENGNTEGRSSSMAGSR. Composition is skewed to polar residues over residues 497–519, 530–542, and 651–665; these read VPSNEFDSGQQSEPLNINQSDIP, LRSPQESQSRQIR, and NGNTEGRSSSMAGSR. One can recognise a PB1 domain in the interval 542–635; that stretch reads RSCTKVHMQG…EVKKLSPKNK (94 aa).

This sequence belongs to the ARF family. Homodimers and heterodimers. Interacts with the auxin-responsive proteins IAA12, IAA13, IAA17 and with ARF2. Binds to RIN13 in the nucleus. As to expression, expressed in the whole plant.

It is found in the nucleus. Its subcellular location is the cytoplasm. Auxin response factors (ARFs) are transcriptional factors that bind specifically to the DNA sequence 5'-TGTCTC-3' found in the auxin-responsive promoter elements (AuxREs). Seems to act as transcriptional repressor. Formation of heterodimers with Aux/IAA proteins may alter their ability to modulate early auxin response genes expression. Promotes flowering, stamen development, floral organ abscission and fruit dehiscence. Acts as a repressor of IAA2, IAA3 and IAA7. Together with RIN13, promotes leaf senescence and cell death. The chain is Auxin response factor 1 from Arabidopsis thaliana (Mouse-ear cress).